The chain runs to 1156 residues: Mastermind-like protein 2 (1156 aa).

Residues 81–165 (QHGQGARKAG…PPASTPGDQR (85 aa)) are disordered. The span at 113–122 (PAASQAAATA) shows a compositional bias: low complexity. The span at 153-165 (EQQPPASTPGDQR) shows a compositional bias: polar residues. At Ser175 the chain carries Phosphoserine. 7 disordered regions span residues 340–359 (FNIDLGQQSQRSTPRPSLPM), 369–506 (SPGL…GSGQ), 531–630 (QQKP…QQQQ), 658–680 (QQQQQQQQPSSQPAQSLPSQPLL), 705–743 (YQVSQQQRQDQHSVVGQNTGPSPSPNPCSNPNTGSGYMN), 784–820 (IAPQDQINRHLSRPPPDYKDQRRNVGNMQPTAQYSGG), and 1059–1100 (LPNL…FQGT). Polar residues-rich tracts occupy residues 344–354 (LGQQSQRSTPR), 371–380 (GLTQGPSGSP), 393–419 (MANSALSTSSPIPSVPQSQAQPQTGSG), and 428–437 (QEVSHAQQLK). The segment covering 440–470 (AANRQQHARMQQHQQQHQPTNWSALPSSAGP) has biased composition (low complexity). Polar residues-rich tracts occupy residues 484 to 496 (SFGQQTFSPQSSP), 532 to 543 (QKPQDLSRSFIN), and 563 to 587 (NSDQANQQMPSVLPSQNKPSLLHYT). Over residues 588 to 630 (QQQQQQQQQQQQQQQQQQQQQQQQQQQQQQQQQQSSISAQQQQ) the composition is skewed to low complexity. 2 stretches are compositionally biased toward low complexity: residues 706–725 (QVSQQQRQDQHSVVGQNTGP) and 733–743 (SNPNTGSGYMN). Polar residues predominate over residues 807–820 (NVGNMQPTAQYSGG).

The protein belongs to the mastermind family. In terms of assembly, interacts through its N-terminal region with the ankyrin repeat region of the Notch proteins NOTCH1, NOTCH2, NOTCH3 and NOTCH4. Forms a DNA-binding complex with Notch proteins and RBPSUH/RBP-J kappa. As to expression, widely expressed with high levels detected in placenta, salivary gland and skeletal muscle.

The protein resides in the nucleus speckle. Functionally, acts as a transcriptional coactivator for NOTCH proteins. Has been shown to amplify NOTCH-induced transcription of HES1. Potentiates activation by NOTCH3 and NOTCH4 more efficiently than MAML1 or MAML3. This Homo sapiens (Human) protein is Mastermind-like protein 2 (MAML2).